The sequence spans 140 residues: Nucleoside diphosphate kinase (140 aa).

ATP is bound by residues lysine 11, phenylalanine 59, arginine 87, threonine 93, arginine 104, and asparagine 114. The Pros-phosphohistidine intermediate role is filled by histidine 117.

This sequence belongs to the NDK family. As to quaternary structure, homotetramer. Requires Mg(2+) as cofactor.

The protein resides in the cytoplasm. The enzyme catalyses a 2'-deoxyribonucleoside 5'-diphosphate + ATP = a 2'-deoxyribonucleoside 5'-triphosphate + ADP. It carries out the reaction a ribonucleoside 5'-diphosphate + ATP = a ribonucleoside 5'-triphosphate + ADP. Major role in the synthesis of nucleoside triphosphates other than ATP. The ATP gamma phosphate is transferred to the NDP beta phosphate via a ping-pong mechanism, using a phosphorylated active-site intermediate. The sequence is that of Nucleoside diphosphate kinase from Cereibacter sphaeroides (strain ATCC 17029 / ATH 2.4.9) (Rhodobacter sphaeroides).